Here is a 269-residue protein sequence, read N- to C-terminus: MSRKPSPTRRTRIHRFHKGSCGRKLVGLTCYDFSTARVLSDCELDFLLVGDSASGVIYGYENTGSVCLDEIIYLAAGVVRGAPNSFIIVDLPFGTYEKSDELAVETAIEVIKRTGASAVKLEGGARMACRISAIVRAGVPVMGHIGFTPQTINALGGYKIQGRDNADLIYLDAQAVEQAGAFAVVMEMVTEDLAKTITSEIKIATIGVGAGRYTDGQLLVINDLIGLSEKKITFAPRYASIDNTVASCVKLWRKDVLEGNFPQKDHIPA.

Residues Asp-51 and Asp-90 each coordinate Mg(2+). 3-methyl-2-oxobutanoate is bound by residues 51–52 (DS), Asp-90, and Lys-120. Glu-122 is a Mg(2+) binding site. Glu-187 (proton acceptor) is an active-site residue.

The protein belongs to the PanB family. As to quaternary structure, homodecamer; pentamer of dimers. It depends on Mg(2+) as a cofactor.

The protein resides in the cytoplasm. It catalyses the reaction 3-methyl-2-oxobutanoate + (6R)-5,10-methylene-5,6,7,8-tetrahydrofolate + H2O = 2-dehydropantoate + (6S)-5,6,7,8-tetrahydrofolate. It functions in the pathway cofactor biosynthesis; (R)-pantothenate biosynthesis; (R)-pantoate from 3-methyl-2-oxobutanoate: step 1/2. In terms of biological role, catalyzes the reversible reaction in which hydroxymethyl group from 5,10-methylenetetrahydrofolate is transferred onto alpha-ketoisovalerate to form ketopantoate. This chain is 3-methyl-2-oxobutanoate hydroxymethyltransferase, found in Tropheryma whipplei (strain TW08/27) (Whipple's bacillus).